Reading from the N-terminus, the 349-residue chain is Sesquiterpene synthase MAC_05714 (349 aa).

Positions 91 and 96 each coordinate Mg(2+). The short motif at 91-96 (DDLFVD) is the DDXXXD motif element. Arg184 is a binding site for substrate. Mg(2+)-binding residues include Asn230, Ser234, and Glu238.

It belongs to the terpene synthase family. The cofactor is Mg(2+).

The enzyme catalyses (2E,6E)-farnesyl diphosphate + H2O = (+)-corvol ether B + diphosphate. It catalyses the reaction (2E,6E)-farnesyl diphosphate + H2O = (+)-corvol ether A + diphosphate. Its function is as follows. Terpene synthase that catalyzes the conversion of (2E,6E)-farnesyl diphosphate (FPP) into sesquiterpenes which are important for fungi-environment interactions. Produces a mixture consisting of 8 sesquiterpenes including corvol ethers A and B, as well as traces of epizonarene, gamma-cadinene, delta-cadinene, alpha-cadinene, alpha-cadinol, and an unidentified sesquiterpene. Produces both corvol ether A and corvol ether B in similar concentrations. The chain is Sesquiterpene synthase MAC_05714 from Metarhizium acridum (strain CQMa 102).